Consider the following 316-residue polypeptide: Aspartate carbamoyltransferase catalytic subunit (316 aa).

Residues arginine 66 and threonine 67 each coordinate carbamoyl phosphate. Residue lysine 94 participates in L-aspartate binding. Carbamoyl phosphate contacts are provided by arginine 116, histidine 146, and glutamine 149. L-aspartate contacts are provided by arginine 180 and arginine 235. The carbamoyl phosphate site is built by glycine 276 and proline 277.

The protein belongs to the aspartate/ornithine carbamoyltransferase superfamily. ATCase family. In terms of assembly, heterododecamer (2C3:3R2) of six catalytic PyrB chains organized as two trimers (C3), and six regulatory PyrI chains organized as three dimers (R2).

The catalysed reaction is carbamoyl phosphate + L-aspartate = N-carbamoyl-L-aspartate + phosphate + H(+). Its pathway is pyrimidine metabolism; UMP biosynthesis via de novo pathway; (S)-dihydroorotate from bicarbonate: step 2/3. In terms of biological role, catalyzes the condensation of carbamoyl phosphate and aspartate to form carbamoyl aspartate and inorganic phosphate, the committed step in the de novo pyrimidine nucleotide biosynthesis pathway. This chain is Aspartate carbamoyltransferase catalytic subunit, found in Stenotrophomonas maltophilia (strain R551-3).